The primary structure comprises 1282 residues: Clustered mitochondria protein homolog (1282 aa).

Residues 1-50 (MADASQATTPAAEGNPVPEVPETQTPPADVNGTTEQEQTEEGAEQALEDQ) are disordered. The segment covering 16 to 36 (PVPEVPETQTPPADVNGTTEQ) has biased composition (low complexity). Positions 37–47 (EQTEEGAEQAL) are enriched in acidic residues. In terms of domain architecture, Clu spans 331 to 575 (DNTRSQETYL…RITPLDIAWM (245 aa)). The stretch at 623 to 650 (EEKKEGEEATEEAKTEEIKTEEAEKSEE) forms a coiled coil. 2 stretches are compositionally biased toward basic and acidic residues: residues 624–661 (EKKE…KTEE) and 668–680 (VAEK…AKED). Disordered regions lie at residues 624–680 (EKKE…AKED) and 913–945 (PVAE…TSPV). 3 TPR repeats span residues 1021-1054 (AQMY…AERT), 1063-1096 (VLNY…WKVI), and 1105-1138 (ITTM…CNKV). Residues 1257–1282 (VENSEKKKGGKKSKGPSNPKKRGGKA) are disordered. Basic residues predominate over residues 1264–1282 (KGGKKSKGPSNPKKRGGKA).

The protein belongs to the CLU family. In terms of assembly, may associate with the eukaryotic translation initiation factor 3 (eIF-3) complex.

It is found in the cytoplasm. MRNA-binding protein involved in proper cytoplasmic distribution of mitochondria. The protein is Clustered mitochondria protein homolog of Neurospora crassa (strain ATCC 24698 / 74-OR23-1A / CBS 708.71 / DSM 1257 / FGSC 987).